Here is a 295-residue protein sequence, read N- to C-terminus: Shikimate dehydrogenase (NADP(+)) (295 aa).

Residues 24 to 26 (SRS) and Thr-71 each bind shikimate. Lys-75 (proton acceptor) is an active-site residue. Glu-87 provides a ligand contact to NADP(+). Asn-96 and Asp-111 together coordinate shikimate. NADP(+) is bound by residues 136-140 (GAGGA), 160-165 (NRTASR), and Met-233. A shikimate-binding site is contributed by Tyr-235. Residue Gly-256 participates in NADP(+) binding.

This sequence belongs to the shikimate dehydrogenase family. In terms of assembly, homodimer.

The catalysed reaction is shikimate + NADP(+) = 3-dehydroshikimate + NADPH + H(+). The protein operates within metabolic intermediate biosynthesis; chorismate biosynthesis; chorismate from D-erythrose 4-phosphate and phosphoenolpyruvate: step 4/7. Involved in the biosynthesis of the chorismate, which leads to the biosynthesis of aromatic amino acids. Catalyzes the reversible NADPH linked reduction of 3-dehydroshikimate (DHSA) to yield shikimate (SA). The protein is Shikimate dehydrogenase (NADP(+)) of Cupriavidus necator (strain ATCC 17699 / DSM 428 / KCTC 22496 / NCIMB 10442 / H16 / Stanier 337) (Ralstonia eutropha).